A 383-amino-acid polypeptide reads, in one-letter code: MAKHLFTSESVSEGHPDKIADQISDAVLDAILEQDSHARVACETYVKTGMVMVGGEITTSAWVDIEEITRKTIRDIGYTNSDMGFDADSCAILNTIGKQSPDINQGVDRTSPEEQGAGDQGLMFGYACNETEVLMPAPITYSHRLVQRQAQVRKSGELNWLRPDAKSQVTFAYENGKPVGIDAVVLSTQHSEDISQKDLIEAVMETIIKPVLPAELITSATKFFINPTGRFVIGGPMGDCGLTGRKIIVDTYGGMARHGGGAFSGKDPSKVDRSAAYAARYVAKNIVAAGLADKCELQVSYAIGIAEPTSISVETFGTSKLEESRLIELIREHFDLRPYGLIKMLDLERPIYLPTAAYGHFGREEFPWERTDKAEALRAAAGL.

Residue H15 participates in ATP binding. Residue D17 coordinates Mg(2+). E43 contacts K(+). 2 residues coordinate L-methionine: E56 and Q99. The tract at residues Q99–R109 is flexible loop. ATP is bound by residues D164 to K166, R230 to F231, D239, R245 to K246, A262, and K266. D239 contributes to the L-methionine binding site. Residue K270 coordinates L-methionine.

It belongs to the AdoMet synthase family. Homotetramer; dimer of dimers. Requires Mg(2+) as cofactor. K(+) serves as cofactor.

The protein resides in the cytoplasm. It catalyses the reaction L-methionine + ATP + H2O = S-adenosyl-L-methionine + phosphate + diphosphate. It participates in amino-acid biosynthesis; S-adenosyl-L-methionine biosynthesis; S-adenosyl-L-methionine from L-methionine: step 1/1. Catalyzes the formation of S-adenosylmethionine (AdoMet) from methionine and ATP. The overall synthetic reaction is composed of two sequential steps, AdoMet formation and the subsequent tripolyphosphate hydrolysis which occurs prior to release of AdoMet from the enzyme. The chain is S-adenosylmethionine synthase from Pseudoalteromonas translucida (strain TAC 125).